Consider the following 538-residue polypeptide: Phosphoenolpyruvate carboxykinase (ATP) (538 aa).

3 residues coordinate substrate: Arg-61, Tyr-195, and Lys-201. ATP contacts are provided by residues Lys-201, His-220, and 236–244 (GLSGTGKTT). Mn(2+) is bound by residues Lys-201 and His-220. Residue Asp-257 participates in Mn(2+) binding. Residues Glu-285, Arg-323, and Thr-449 each contribute to the ATP site. Arg-323 is a binding site for substrate.

It belongs to the phosphoenolpyruvate carboxykinase (ATP) family. Requires Mn(2+) as cofactor.

It is found in the cytoplasm. It catalyses the reaction oxaloacetate + ATP = phosphoenolpyruvate + ADP + CO2. It participates in carbohydrate biosynthesis; gluconeogenesis. Involved in the gluconeogenesis. Catalyzes the conversion of oxaloacetate (OAA) to phosphoenolpyruvate (PEP) through direct phosphoryl transfer between the nucleoside triphosphate and OAA. The polypeptide is Phosphoenolpyruvate carboxykinase (ATP) (Afipia carboxidovorans (strain ATCC 49405 / DSM 1227 / KCTC 32145 / OM5) (Oligotropha carboxidovorans)).